Consider the following 374-residue polypeptide: Polar flagellin E (374 aa).

A coiled-coil region spans residues Ser-102–Ala-126.

This sequence belongs to the bacterial flagellin family. In terms of assembly, heteromer of multiple flagellin subunits including FlaA, FlaB/D, FlaC, FlaE and FlaF.

The protein resides in the secreted. Its subcellular location is the bacterial flagellum. Its function is as follows. Flagellin is the subunit protein which polymerizes to form the filaments of bacterial flagella. The sequence is that of Polar flagellin E (flaE) from Vibrio parahaemolyticus serotype O3:K6 (strain RIMD 2210633).